We begin with the raw amino-acid sequence, 333 residues long: NADH dehydrogenase (ubiquinone) complex I, assembly factor 6 (333 aa).

A mitochondrion-targeting transit peptide spans 1–44 (MAASTLGSAWGPLRLGVPGLCRRRPPRGLWARARRLSEPVASGR).

The protein belongs to the NDUFAF6 family.

Its subcellular location is the mitochondrion inner membrane. Involved in the assembly of mitochondrial NADH:ubiquinone oxidoreductase complex (complex I) at early stages. May play a role in the biogenesis of complex I subunit MT-ND1. The protein is NADH dehydrogenase (ubiquinone) complex I, assembly factor 6 (NDUFAF6) of Bos taurus (Bovine).